The following is a 280-amino-acid chain: MAFQGTSRTLTQQSSAATSDDLQKILFSPEAIKKMATECDLGRHHWMRADNAISVRPLVPEVTHGRIASFFKSGYDVGELCSKGYMSVPQVLCAVTRTVSTDAEGSLRIYLADLGDKELSPIDGQCVSLHNHDLPALVSFQPTYDCPMETVGNRKRCFAVVIERHGYIGYTGTTASVCSNWQARFSSKNNNYTHIAAGKTLVLPFNRLAEQTKPSAVARLLKSQLNNIESSQYLLTNAKINQNAHVSESEELNVESPPAAIGSSSASRSEAFRPQVVNGL.

A disordered region spans residues Glu248–Ser267. The segment covering Glu255–Ser267 has biased composition (low complexity).

This sequence belongs to the cucumovirus movement protein family.

The protein localises to the host cell junction. It localises to the host plasmodesma. Transports viral genome to neighboring plant cells directly through plasmosdesmata, without any budding. The movement protein allows efficient cell to cell propagation, by bypassing the host cell wall barrier. Acts by forming a tubular structure at the host plasmodesmata, enlarging it enough to allow free passage of virion capsids. In Cucumis sativus (Cucumber), this protein is Movement protein.